A 236-amino-acid chain; its full sequence is Movement and silencing protein TGBp1 (236 aa).

Residues 1–117 (MDSEIVERLT…EPTARAHYTC (117 aa)) enclose the (+)RNA virus helicase ATP-binding domain. In terms of domain architecture, (+)RNA virus helicase C-terminal spans 118–236 (NRTHRLGQLT…LYTAHFAPSA (119 aa)).

The protein belongs to the Tymovirales TGBp1 protein family. Homodimer and homooligomer. Interacts with capsid protein. Interacts with host AGO1; this interaction targets the host protein for degradation, thereby suppressing the antiviral RNA silencing.

The protein localises to the host cytoplasm. Its function is as follows. Transports viral genome to neighboring plant cells directly through plasmosdesmata, without any budding. The movement protein allows efficient cell to cell propagation, by bypassing the host cell wall barrier. Increases plasmodesma size exclusion limit. Acts as a suppressor of RNA-mediated gene silencing, also known as post-transcriptional gene silencing (PTGS), a mechanism of plant viral defense that limits the accumulation of viral RNAs. This is Movement and silencing protein TGBp1 from Setaria italica (Foxtail millet).